A 203-amino-acid chain; its full sequence is MPVNLNHTLLLCLLVAASLLSGCSSTLGEQYQTLNVSQSKQAKAWELQGKIAVKSPTDKFSTNLYWFHLGEENQLSLTTMLGTTVLTLNSKPGLARLEVDGKEYVDSNPQDLLEAVSGWSIPLDNLPLWITGQVGVNDEISAYHDDGLIKSLISPAPEHNWQVSFLSWQQQSGASVPKQIKIERAGVQVRIQINRWQALKTQQ.

Residues 1–22 (MPVNLNHTLLLCLLVAASLLSG) form the signal peptide. Cysteine 23 carries the N-palmitoyl cysteine lipid modification. The S-diacylglycerol cysteine moiety is linked to residue cysteine 23.

The protein belongs to the LolB family. Monomer.

It is found in the cell outer membrane. Plays a critical role in the incorporation of lipoproteins in the outer membrane after they are released by the LolA protein. In Shewanella denitrificans (strain OS217 / ATCC BAA-1090 / DSM 15013), this protein is Outer-membrane lipoprotein LolB.